Here is a 197-residue protein sequence, read N- to C-terminus: Protein LURP-one-related 9 (197 aa).

It belongs to the LOR family.

Might be related to the phospholipid scramblase and tubby-like superfamily of membrane tethered transcription factors. The polypeptide is Protein LURP-one-related 9 (Arabidopsis thaliana (Mouse-ear cress)).